A 330-amino-acid chain; its full sequence is Olfactory receptor 11H6 (330 aa).

The Extracellular segment spans residues 1–43; it reads MFFIIHSLVTSVFLTALGPQNRTMHFVTEFVLLGFHGQREMQS. An N-linked (GlcNAc...) asparagine glycan is attached at N21. The chain crosses the membrane as a helical span at residues 44 to 64; the sequence is CFFSFILVLYLLTLLGNGAIV. Over 65–72 the chain is Cytoplasmic; the sequence is CAVKLDRR. Residues 73–93 form a helical membrane-spanning segment; that stretch reads LHTPMYILLGNFAFLEIWYIS. Residues 94–117 lie on the Extracellular side of the membrane; it reads STVPNMLVNILSEIKTISFSGCFL. C115 and C207 are oxidised to a cystine. A helical transmembrane segment spans residues 118–138; the sequence is QFYFFFSLGTTECFFLSVMAY. The Cytoplasmic segment spans residues 139-157; sequence DRYLAICRPLHYPSIMTGK. Residues 158–178 traverse the membrane as a helical segment; it reads FCIILVCVCWVGGFLCYPVPI. Topologically, residues 179–215 are extracellular; sequence VLISQLPFCGPNIIDHLVCDPGPLFALACISAPSTEL. The chain crosses the membrane as a helical span at residues 216–235; the sequence is ICYTFNSMIIFGPFLSILGS. The Cytoplasmic segment spans residues 236–255; sequence YTLVIRAVLCIPSGAGRTKA. The helical transmembrane segment at 256–276 threads the bilayer; it reads FSTCGSHLMVVSLFYGTLMVM. Over 277–289 the chain is Extracellular; the sequence is YVSPTSGNPAGMQ. Residues 290–310 traverse the membrane as a helical segment; it reads KIITLVYTAMTPFLNPLIYSL. The Cytoplasmic segment spans residues 311 to 330; it reads RNKDMKDALKRVLGLTVSQN.

This sequence belongs to the G-protein coupled receptor 1 family.

The protein localises to the cell membrane. In terms of biological role, odorant receptor. This chain is Olfactory receptor 11H6 (OR11H6), found in Homo sapiens (Human).